We begin with the raw amino-acid sequence, 284 residues long: tRNA pseudouridine synthase B (284 aa).

Asp-40 (nucleophile) is an active-site residue.

Belongs to the pseudouridine synthase TruB family. Type 1 subfamily.

The enzyme catalyses uridine(55) in tRNA = pseudouridine(55) in tRNA. Responsible for synthesis of pseudouridine from uracil-55 in the psi GC loop of transfer RNAs. The sequence is that of tRNA pseudouridine synthase B from Helicobacter hepaticus (strain ATCC 51449 / 3B1).